Here is a 102-residue protein sequence, read N- to C-terminus: NADH-quinone oxidoreductase subunit K (102 aa).

3 helical membrane passes run 5–25 (LAHY…GIFL), 31–51 (IILL…FVAF), and 62–82 (VFVF…LAIL).

The protein belongs to the complex I subunit 4L family. NDH-1 is composed of 14 different subunits. Subunits NuoA, H, J, K, L, M, N constitute the membrane sector of the complex.

The protein resides in the cell inner membrane. It catalyses the reaction a quinone + NADH + 5 H(+)(in) = a quinol + NAD(+) + 4 H(+)(out). Functionally, NDH-1 shuttles electrons from NADH, via FMN and iron-sulfur (Fe-S) centers, to quinones in the respiratory chain. The immediate electron acceptor for the enzyme in this species is believed to be ubiquinone. Couples the redox reaction to proton translocation (for every two electrons transferred, four hydrogen ions are translocated across the cytoplasmic membrane), and thus conserves the redox energy in a proton gradient. The chain is NADH-quinone oxidoreductase subunit K from Bordetella petrii (strain ATCC BAA-461 / DSM 12804 / CCUG 43448).